The primary structure comprises 559 residues: DNA ligase (559 aa).

E247 is an ATP binding site. Catalysis depends on K249, which acts as the N6-AMP-lysine intermediate. ATP is bound by residues R254, R269, E299, F339, R414, and K420.

Belongs to the ATP-dependent DNA ligase family. It depends on Mg(2+) as a cofactor.

It carries out the reaction ATP + (deoxyribonucleotide)n-3'-hydroxyl + 5'-phospho-(deoxyribonucleotide)m = (deoxyribonucleotide)n+m + AMP + diphosphate.. The enzyme catalyses NAD(+) + (deoxyribonucleotide)n-3'-hydroxyl + 5'-phospho-(deoxyribonucleotide)m = (deoxyribonucleotide)n+m + AMP + beta-nicotinamide D-nucleotide.. In terms of biological role, DNA ligase that seals nicks in double-stranded DNA during DNA replication, DNA recombination and DNA repair. Shows high activity with either ATP or NAD(+). The protein is DNA ligase of Thermococcus fumicolans.